The chain runs to 193 residues: Putative manganese efflux pump MntP (193 aa).

Helical transmembrane passes span 3–23, 41–61, 65–85, 106–126, 133–153, and 169–189; these read MYATLILALALSMDAFAASIC, LIFGLAEACTPLIGWSLGLYA, IIEWDHWVAFTLLFILGCRMI, IVLITTAIATSLDAMAIGIGL, IVHTAMAIGMMTMIMATLGML, and IGGLILIAIGFNILFEHLELF.

Belongs to the MntP (TC 9.B.29) family.

It is found in the cell inner membrane. Probably functions as a manganese efflux pump. The chain is Putative manganese efflux pump MntP from Photorhabdus laumondii subsp. laumondii (strain DSM 15139 / CIP 105565 / TT01) (Photorhabdus luminescens subsp. laumondii).